Reading from the N-terminus, the 255-residue chain is Tabinhibitin 1 (255 aa).

Residues Met-1–Ala-23 form the signal peptide. An SCP domain is found at Leu-67–Phe-211.

This sequence belongs to the CRISP family. In terms of tissue distribution, expressed in salivary glands.

The protein localises to the secreted. Inhibits platelet aggregation induced by all agonists tested. May act by competing with fibrinogen for binding to glycoprotein IIb/IIIa (ITGA2B/ITGB3). This Tabanus yao (Horsefly) protein is Tabinhibitin 1.